Here is a 427-residue protein sequence, read N- to C-terminus: 12-alpha,13-alpha-dihydroxyfumitremorgin C prenyltransferase (427 aa).

E94 contacts substrate. R105, K192, Y194, Y268, Q353, Y355, Y419, and Y423 together coordinate dimethylallyl diphosphate.

It belongs to the tryptophan dimethylallyltransferase family.

The catalysed reaction is 12alpha,13alpha-dihydroxyfumitremorgin C + dimethylallyl diphosphate = fumitremorgin B + diphosphate. It functions in the pathway mycotoxin biosynthesis. Its function is as follows. 12-alpha,13-alpha-dihydroxyfumitremorgin C prenyltransferase; part of the gene cluster that mediates the biosynthesis of fumitremorgins, indole alkaloids that carry not only intriguing chemical structures, but also interesting biological and pharmacological activities. The biosynthesis of fumitremorgin-type alkaloids begins by condensation of the two amino acids L-tryptophan and L-proline to brevianamide F, catalyzed by the non-ribosomal peptide synthetase ftmA. Brevianamide F is then prenylated by the prenyltransferase ftmPT1/ftmB in the presence of dimethylallyl diphosphate, resulting in the formation of tryprostatin B. The three cytochrome P450 monooxygenases, ftmP450-1/ftmC, ftmP450-2/ftmE and ftmP450-3/FtmG, are responsible for the conversion of tryprostatin B to 6-hydroxytryprostatin B, tryprostatin A to fumitremorgin C and fumitremorgin C to 12,13-dihydroxyfumitremorgin C, respectively. The putative methyltransferase ftmMT/ftmD is expected for the conversion of 6-hydroxytryprostatin B to tryprostatin A. FtmPT2/FtmH catalyzes the prenylation of 12,13-dihydroxyfumitre-morgin C in the presence of dimethylallyl diphosphate, resulting in the formation of fumitremorgin B. Fumitremorgin B is further converted to verruculogen by ftmOx1/ftmF via the insertion of an endoperoxide bond between the two prenyl moieties. In some fungal species, verruculogen is further converted to fumitremorgin A, but the enzymes involved in this step have not been identified yet. The polypeptide is 12-alpha,13-alpha-dihydroxyfumitremorgin C prenyltransferase (Aspergillus fumigatus (strain ATCC MYA-4609 / CBS 101355 / FGSC A1100 / Af293) (Neosartorya fumigata)).